The chain runs to 375 residues: Succinyl-diaminopimelate desuccinylase (375 aa).

Residue His-66 participates in Zn(2+) binding. The active site involves Asp-68. Residue Asp-99 participates in Zn(2+) binding. Residue Glu-133 is the Proton acceptor of the active site. 3 residues coordinate Zn(2+): Glu-134, Glu-162, and His-348.

Belongs to the peptidase M20A family. DapE subfamily. As to quaternary structure, homodimer. Requires Zn(2+) as cofactor. The cofactor is Co(2+).

The catalysed reaction is N-succinyl-(2S,6S)-2,6-diaminopimelate + H2O = (2S,6S)-2,6-diaminopimelate + succinate. It participates in amino-acid biosynthesis; L-lysine biosynthesis via DAP pathway; LL-2,6-diaminopimelate from (S)-tetrahydrodipicolinate (succinylase route): step 3/3. Catalyzes the hydrolysis of N-succinyl-L,L-diaminopimelic acid (SDAP), forming succinate and LL-2,6-diaminopimelate (DAP), an intermediate involved in the bacterial biosynthesis of lysine and meso-diaminopimelic acid, an essential component of bacterial cell walls. The polypeptide is Succinyl-diaminopimelate desuccinylase (Aeromonas hydrophila subsp. hydrophila (strain ATCC 7966 / DSM 30187 / BCRC 13018 / CCUG 14551 / JCM 1027 / KCTC 2358 / NCIMB 9240 / NCTC 8049)).